The sequence spans 4699 residues: Fat-like cadherin-related tumor suppressor homolog (4699 aa).

Residues 1 to 38 form the signal peptide; it reads MFTMKIKKYVTPVKRKAFTILQWISLLCSLWLIPTVQS. Residues 39–4285 lie on the Extracellular side of the membrane; sequence KADEKHTATL…KNFSIEHISG (4247 aa). 34 consecutive Cadherin domains span residues 63 to 183, 184 to 291, 288 to 400, 401 to 507, 508 to 613, 614 to 716, 773 to 877, 878 to 980, 981 to 1088, 1089 to 1198, 1194 to 1299, 1300 to 1405, 1408 to 1506, 1507 to 1612, 1613 to 1717, 1718 to 1815, 1816 to 1932, 1933 to 2033, 2034 to 2140, 2141 to 2241, 2242 to 2341, 2342 to 2449, 2450 to 2551, 2552 to 2654, 2655 to 2763, 2764 to 2860, 2861 to 2967, 2968 to 3072, 3068 to 3169, 3170 to 3273, 3274 to 3378, 3379 to 3483, 3484 to 3588, and 3589 to 3696; these read SHSV…SPLF, YPTQ…APEI, APEI…IPIF, TQEI…DPIF, ENVN…RPQF, ERVN…SSIL, VNFP…RPVI, QKTL…APVF, GVQE…APEF, DDFV…KPVY, DKPV…SPEF, DQRV…APLI, KTSE…PPQF, AKDV…HPEF, TAKI…PPKF, PTNN…IPYF, VQNE…PPVF, NERE…NFAF, QRES…CPLF, VNMP…MPVF, EKQF…YPEI, ESDI…APCF, VEPS…SPLF, DQST…VPYF, LLKE…IPTF, EKSS…YPKF, DNTF…APVF, KLPI…KPRY, LKPR…MPIF, SMAQ…PPEF, SMRQ…SPTF, LQNL…APIF, SSSN…PPIV, and TPLE…VIRF. N-linked (GlcNAc...) asparagine glycans are attached at residues asparagine 68 and asparagine 159. N-linked (GlcNAc...) asparagine glycosylation occurs at asparagine 367. Residues asparagine 782, asparagine 846, and asparagine 926 are each glycosylated (N-linked (GlcNAc...) asparagine). N-linked (GlcNAc...) asparagine glycans are attached at residues asparagine 1109, asparagine 1201, asparagine 1315, asparagine 1442, asparagine 1476, and asparagine 1514. 19 disulfide bridges follow: cysteine 3807/cysteine 3819, cysteine 3814/cysteine 3851, cysteine 3853/cysteine 3862, cysteine 3869/cysteine 3880, cysteine 3874/cysteine 3891, cysteine 3893/cysteine 3902, cysteine 4071/cysteine 4105, cysteine 4117/cysteine 4128, cysteine 4122/cysteine 4138, cysteine 4140/cysteine 4149, cysteine 4156/cysteine 4167, cysteine 4161/cysteine 4177, cysteine 4179/cysteine 4188, cysteine 4194/cysteine 4205, cysteine 4199/cysteine 4214, cysteine 4216/cysteine 4224, cysteine 4231/cysteine 4242, cysteine 4236/cysteine 4251, and cysteine 4253/cysteine 4262. Residues 3865–3903 form the EGF-like 1 domain; sequence TVNACSTDPCSPQRICMPSGSALGYQCVCPKGFSGTYCE. The region spanning 3921 to 4105 is the Laminin G-like domain; that stretch reads AVSFGGKSYA…KRFTNVEFKC (185 aa). EGF-like domains are found at residues 4113–4150, 4152–4189, 4190–4225, and 4227–4263; these read RLGI…KHCE, DLDP…KRCE, YGKF…PTCE, and DVDE…ASCG. The chain crosses the membrane as a helical span at residues 4286 to 4306; that stretch reads IISGVAVVLVIISCVLCCVVL. The Cytoplasmic segment spans residues 4307–4699; that stretch reads KRSSSSKRRN…EFLPQQQTNN (393 aa).

Localizes where basal actin filaments terminate.

It localises to the cell membrane. Required for the planar polarity of actin filament orientation at the basal side of ovarian follicle cells. Required for proper egg chamber shape and elongation of the egg chamber during oogenesis. Required for the correct planar polarization of Rab10 within the basal follicle cell epithelium and is therefore indirectly involved in the Rab10-dependent remodeling of the basal membrane during egg chamber elongation. This is Fat-like cadherin-related tumor suppressor homolog (kug) from Drosophila melanogaster (Fruit fly).